The sequence spans 489 residues: Membrane-bound acylglycerophosphatidylinositol O-acyltransferase frj (489 aa).

Transmembrane regions (helical) follow at residues 2–22, 40–60, and 75–95; these read SIDD…GSYV, VLVV…SLAL, and LVTF…DFYF. Active-site residues include Asn-331 and His-364. 2 helical membrane-spanning segments follow: residues 405 to 425 and 433 to 453; these read VIFW…FLLS and FYSS…ALGF.

Belongs to the membrane-bound acyltransferase family.

Its subcellular location is the membrane. It carries out the reaction a 1-acyl-sn-glycero-3-phospho-(1D-myo-inositol) + (5Z,8Z,11Z,14Z)-eicosatetraenoyl-CoA = a 1-acyl-2-(5Z,8Z,11Z,14Z-eicosatetraenoyl)-sn-glycero-3-phospho-(1D-myo-inositol) + CoA. The enzyme catalyses a 1-acyl-sn-glycero-3-phosphocholine + an acyl-CoA = a 1,2-diacyl-sn-glycero-3-phosphocholine + CoA. It catalyses the reaction (9Z)-hexadecenoyl-CoA + 1-hexadecanoyl-sn-glycero-3-phosphocholine = 1-hexadecanoyl-2-(9Z-hexadecenoyl)-sn-glycero-3-phosphocholine + CoA. The catalysed reaction is a 1-acyl-sn-glycero-3-phospho-L-serine + an acyl-CoA = a 1,2-diacyl-sn-glycero-3-phospho-L-serine + CoA. It carries out the reaction 1-(9Z-octadecenoyl)-sn-glycero-3-phospho-L-serine + (9Z)-hexadecenoyl-CoA = 1-(9Z-octadecenoyl)-2-(9Z-hexadecenoyl)-sn-glycero-3-phospho-L-serine + CoA. The enzyme catalyses a 1-acyl-sn-glycero-3-phosphoethanolamine + an acyl-CoA = a 1,2-diacyl-sn-glycero-3-phosphoethanolamine + CoA. It catalyses the reaction 1-hexadecanoyl-sn-glycero-3-phosphoethanolamine + (9Z)-hexadecenoyl-CoA = 1-hexadecanoyl-2-(9Z)-hexadecenoyl-sn-glycero-3-phosphoethanolamine + CoA. Its pathway is lipid metabolism; phospholipid metabolism. Its function is as follows. Acyltransferase that mediates the acylation of lysophospholipids to produce phospholipids (glycerophospholipids). Highest activity with lysophosphatidylinositol (1-acyl-sn-glycero-3-phospho-(1D-myo-inositol) or LPI) producing phosphatidylinositol (1,2-diacyl-sn-glycero-3-phospho-(1D-myo-inositol) or PI) (LPIAT activity), but also converts lysophosphatidylcholine (1-acyl-sn-glycero-3-phosphocholine or LPC) to phosphatidylcholine (1,2-diacyl-sn-glycero-3-phosphocholine or PC) (LPCAT activity), lysophosphatidylserine (1-acyl-2-hydroxy-sn-glycero-3-phospho-L-serine or LPS) to phosphatidylserine (1,2-diacyl-sn-glycero-3-phospho-L-serine or PS) (LPSAT activity), and lysophosphatidylethanolamine (1-acyl-sn-glycero-3-phosphoethanolamine or LPE) producing phosphatidylethanolamine (1,2-diacyl-sn-glycero-3-phosphoethanolamine or PE) (LPEAT activity). Has a preference for unsaturated fatty acid arachidonoyl-CoA ((5Z,8Z,11Z,14Z)-eicosatetraenoyl-CoA). Glycerophospholipids are important structural and functional components of cellular membrane, acyl-chain remodeling regulates the molecular species distribution of glycerophospholipids which can affect membrane fluidity and curvature. The protein is Membrane-bound acylglycerophosphatidylinositol O-acyltransferase frj of Drosophila melanogaster (Fruit fly).